Here is a 346-residue protein sequence, read N- to C-terminus: N(4)-(beta-N-acetylglucosaminyl)-L-asparaginase (346 aa).

Positions 1–23 are cleaved as a signal peptide; that stretch reads MARKSNLPVLLVPFLLCQALVRC. Blocked amino end (Ser) is present on Ser24. N-linked (GlcNAc...) asparagine glycosylation occurs at Asn38. 2 disulfide bridges follow: Cys64–Cys69 and Cys163–Cys179. Thr206 functions as the Nucleophile in the catalytic mechanism. Substrate contacts are provided by residues 234–237 and 257–260; these read RVGD and TGNG. Cys286 and Cys306 are disulfide-bonded. The N-linked (GlcNAc...) asparagine glycan is linked to Asn308. Cysteines 317 and 345 form a disulfide.

Belongs to the Ntn-hydrolase family. Heterotetramer of two alpha and two beta chains arranged as a dimer of alpha/beta heterodimers. Cleaved into an alpha and beta chain by autocatalysis; this activates the enzyme. The N-terminal residue of the beta subunit is responsible for the nucleophile hydrolase activity. In terms of processing, N-glycosylated.

Its subcellular location is the lysosome. It carries out the reaction N(4)-(beta-N-acetyl-D-glucosaminyl)-L-asparagine + H2O = N-acetyl-beta-D-glucosaminylamine + L-aspartate + H(+). Cleaves the GlcNAc-Asn bond which joins oligosaccharides to the peptide of asparagine-linked glycoproteins. This is N(4)-(beta-N-acetylglucosaminyl)-L-asparaginase (AGA) from Homo sapiens (Human).